Reading from the N-terminus, the 468-residue chain is Zinc-regulated transporter 1 (468 aa).

A signal peptide spans 1–17 (MKFTHLFFIGLLTKVYT). Residues 18–185 (ETVTVLSTRS…VKRDYDIPLR (168 aa)) are Extracellular-facing. Residues Asn-57 and Asn-67 are each glycosylated (N-linked (GlcNAc...) asparagine). A helical membrane pass occupies residues 186–206 (IGLLFVILVTSGIGSFGPIVL). The Cytoplasmic segment spans residues 207–217 (KQFVNLSQENY). A helical membrane pass occupies residues 218-238 (IIVIIKQFGTGIIISTAFVHL). The Extracellular segment spans residues 239–257 (MTHAQLMWSNSCLKIKYEG). A helical membrane pass occupies residues 258-278 (TGASITMAGIFIAFIIEYIAL). Over 279-314 (RIVNARDTGKVDKKEIEETSSNEQSLHGISVNDKIS) the chain is Cytoplasmic. A helical membrane pass occupies residues 315 to 335 (VMILEAGIIFHSILIGITLVV). At 336–338 (TDD) the chain is on the extracellular side. Residues 339-359 (VYFITLFIVIVFHQFFEGLAL) traverse the membrane as a helical segment. Topologically, residues 360 to 374 (SSRIISITNASLSTK) are cytoplasmic. The chain crosses the membrane as a helical span at residues 375-395 (LVMALMFALITPIGMAIGIGV). The Extracellular segment spans residues 396–406 (LNKFNGNDPST). A helical transmembrane segment spans residues 407 to 427 (LIALGTLDSFSAGVLLWTGLI). Residues 428–447 (EMWSHDWLHGHLRNSSFVKT) are Cytoplasmic-facing. The helical transmembrane segment at 448–468 (TVALVSLILGMLLMSLLGNWA) threads the bilayer.

Belongs to the ZIP transporter (TC 2.A.5) family.

It is found in the cell membrane. The enzyme catalyses Zn(2+)(in) = Zn(2+)(out). Functionally, zinc transporter that acts with PRA1 in sequestration of zinc from host tissues during infection. The pH-regulated antigen 1 (PRA1) binds zinc from its environment and then reassociates with ZRT1 to acquire this essential metal. The chain is Zinc-regulated transporter 1 (ZRT101) from Candida albicans (strain SC5314 / ATCC MYA-2876) (Yeast).